Reading from the N-terminus, the 147-residue chain is 16 kDa phloem protein 2 (147 aa).

A C2 domain is found at 1–103 (MPHGTLEVVL…FVEGSIPPTA (103 aa)). Residues Asp-20, Asp-26, Asp-73, Asp-75, and Asp-81 each coordinate Ca(2+). Positions 126–147 (ENRSRGMDEESYGGWKNSEASY) are disordered.

It depends on Ca(2+) as a cofactor.

In terms of biological role, binds to both sense and antisense RNA. Can also bind sheared DNA and dodecamer DNA with a low affinity. Interacts with mesophyll plasmodesmata to mediate its own cell-to-cell transport and potentiate RNA trafficking. May play a role in plant defense signaling. The sequence is that of 16 kDa phloem protein 2 from Arabidopsis thaliana (Mouse-ear cress).